Consider the following 71-residue polypeptide: MKKIILALVLMLFSFCTLGQETASMHLDDTLSAPIAAEINRKACDTQTPSPSEENDDWCCEVCCNPACAGC.

An N-terminal signal peptide occupies residues 1–19 (MKKIILALVLMLFSFCTLG). A propeptide spanning residues 20–52 (QETASMHLDDTLSAPIAAEINRKACDTQTPSPS) is cleaved from the precursor. 3 disulfides stabilise this stretch: Cys-59-Cys-64, Cys-60-Cys-68, and Cys-63-Cys-71.

This sequence belongs to the heat-stable enterotoxin family.

Its subcellular location is the secreted. Its function is as follows. Toxin which activates the particulate form of guanylate cyclase and increases cyclic GMP levels within the host intestinal epithelial cells. Could play an important role in pathogenesis. The chain is Heat-stable enterotoxin B (ystB) from Yersinia enterocolitica.